A 220-amino-acid polypeptide reads, in one-letter code: Inner membrane-spanning protein YciB (220 aa).

A run of 6 helical transmembrane segments spans residues 20-40, 57-77, 86-106, 123-143, 156-176, and 187-207; these read EVPP…FFFA, IGAP…IALA, LPIM…LTLW, LFGA…GYVF, KLTL…EVVW, and FKVW…MPLI.

This sequence belongs to the YciB family.

Its subcellular location is the cell inner membrane. Plays a role in cell envelope biogenesis, maintenance of cell envelope integrity and membrane homeostasis. In Brucella anthropi (strain ATCC 49188 / DSM 6882 / CCUG 24695 / JCM 21032 / LMG 3331 / NBRC 15819 / NCTC 12168 / Alc 37) (Ochrobactrum anthropi), this protein is Inner membrane-spanning protein YciB.